The following is a 2273-amino-acid chain: Acetyl-CoA carboxylase, mitochondrial (2273 aa).

Residues 1-104 (KGKTITHGQS…RGNIHKHTRL (104 aa)) constitute a mitochondrion transit peptide. The region spanning 134-635 (VISKILIANN…STGWLDDLIL (502 aa)) is the Biotin carboxylation domain. The ATP-grasp domain occupies 292-484 (KTNFVSVPDD…LPATQLQIAM (193 aa)). 332 to 337 (GGGGKG) contacts ATP. Arg-459 is a catalytic residue. Positions 763–837 (LEAELNPTQV…EAGDVIAKLT (75 aa)) constitute a Biotinyl-binding domain. Lys-804 is subject to N6-biotinyllysine. The CoA carboxyltransferase N-terminal domain maps to 1532-1867 (PYSVKDWLQP…KRDMSPPLLE (336 aa)). A carboxyltransferase region spans residues 1532–2187 (PYSVKDWLQP…EGQVIKRLQK (656 aa)). Arg-1776, Lys-2080, and Arg-2082 together coordinate CoA. The CoA carboxyltransferase C-terminal domain maps to 1871-2187 (RWDRDVDFKP…EGQVIKRLQK (317 aa)).

Requires biotin as cofactor.

The protein localises to the mitochondrion. The catalysed reaction is hydrogencarbonate + acetyl-CoA + ATP = malonyl-CoA + ADP + phosphate + H(+). It carries out the reaction N(6)-biotinyl-L-lysyl-[protein] + hydrogencarbonate + ATP = N(6)-carboxybiotinyl-L-lysyl-[protein] + ADP + phosphate + H(+). Its pathway is lipid metabolism; malonyl-CoA biosynthesis; malonyl-CoA from acetyl-CoA: step 1/1. Its function is as follows. Catalyzes the rate-limiting reaction in the mitochondrial fatty acid synthesis (FAS) type II pathway. Responsible for the production of the mitochondrial malonyl-CoA, used for the biosynthesis of the cofactor lipoic acid. This protein carries three functions: biotin carboxyl carrier protein, biotin carboxylase, and carboxyltransferase. This is Acetyl-CoA carboxylase, mitochondrial (HFA1) from Saccharomyces cerevisiae (strain RM11-1a) (Baker's yeast).